Reading from the N-terminus, the 117-residue chain is U9-theraphotoxin-Hhn1a (117 aa).

The signal sequence occupies residues 1-21 (MNTVRVTFLLVFVLAVSLGQA). Residues 22 to 75 (DEDGNRMEMRQEIEKTEADSSYFAENLLLQKLEELEAKLWEETSEESRNSRQKR) constitute a propeptide that is removed on maturation. Cystine bridges form between C76–C94, C83–C99, and C93–C114.

This sequence belongs to the neurotoxin 14 (magi-1) family. 01 (HNTX-16) subfamily. In terms of tissue distribution, expressed by the venom gland.

It localises to the secreted. Probable ion channel inhibitor. This chain is U9-theraphotoxin-Hhn1a, found in Cyriopagopus hainanus (Chinese bird spider).